The chain runs to 181 residues: ATP-dependent protease subunit HslV (181 aa).

The active site involves threonine 9. Na(+) is bound by residues serine 166, cysteine 169, and threonine 172.

Belongs to the peptidase T1B family. HslV subfamily. A double ring-shaped homohexamer of HslV is capped on each side by a ring-shaped HslU homohexamer. The assembly of the HslU/HslV complex is dependent on binding of ATP.

It is found in the cytoplasm. The enzyme catalyses ATP-dependent cleavage of peptide bonds with broad specificity.. With respect to regulation, allosterically activated by HslU binding. Its function is as follows. Protease subunit of a proteasome-like degradation complex believed to be a general protein degrading machinery. The polypeptide is ATP-dependent protease subunit HslV (Staphylococcus haemolyticus (strain JCSC1435)).